The sequence spans 257 residues: Triosephosphate isomerase, cytosolic (257 aa).

Residues N10 and K12 each coordinate substrate. H96 serves as the catalytic Electrophile. E167 serves as the catalytic Proton acceptor.

It belongs to the triosephosphate isomerase family. As to quaternary structure, homodimer. In terms of tissue distribution, higher levels found in leaves than in roots.

It is found in the cytoplasm. It catalyses the reaction D-glyceraldehyde 3-phosphate = dihydroxyacetone phosphate. It participates in carbohydrate biosynthesis; gluconeogenesis. The protein operates within carbohydrate degradation; glycolysis; D-glyceraldehyde 3-phosphate from glycerone phosphate: step 1/1. The chain is Triosephosphate isomerase, cytosolic (TPI) from Stellaria longipes (Longstalk starwort).